The sequence spans 283 residues: Alpha-ketoglutarate-dependent taurine dioxygenase (283 aa).

Taurine contacts are provided by His-70, Tyr-73, and Asn-95. The Fe cation site is built by His-99 and Asp-101. Val-102 serves as a coordination point for taurine. 2-oxoglutarate is bound at residue Thr-126. 3-hydroxytryptophan; by autocatalysis is present on residues Trp-128, Trp-240, and Trp-248. His-255 serves as a coordination point for Fe cation. 2-oxoglutarate is bound by residues His-255, Arg-266, and Arg-270. Arg-270 contributes to the taurine binding site.

It belongs to the TfdA dioxygenase family. In terms of assembly, homodimer. Was later shown to be a homotetramer arranged as a dimer of two dimers. It depends on Fe(2+) as a cofactor.

The catalysed reaction is taurine + 2-oxoglutarate + O2 = aminoacetaldehyde + sulfite + succinate + CO2 + H(+). The protein operates within organosulfur degradation; taurine degradation via aerobic pathway; aminoacetaldehyde and sulfite from taurine: step 1/1. With respect to regulation, activated by ascorbate and inhibited by divalent metal ions such as zinc, copper and cobalt. Functionally, catalyzes the alpha-ketoglutarate-dependent hydroxylation of taurine yielding sulfite and aminoacetaldehyde after decomposition of an unstable intermediate. Is required for the utilization of taurine (2-aminoethanesulfonate) as an alternative sulfur source for growth in the absence of sulfate. To a lesser extent, pentanesulfonate, 3-(N-morpholino)propanesulfonate and 1,3-dioxo-2-isoindolineethanesulfonate are also desulfonated by this enzyme in vitro; however, desulfonation by TauD of organosulfonates other than taurine seem to be of little or no importance for sulfur metabolism in vivo. The protein is Alpha-ketoglutarate-dependent taurine dioxygenase (tauD) of Escherichia coli (strain K12).